The following is a 37-amino-acid chain: Large ribosomal subunit protein bL36c (37 aa).

The protein belongs to the bacterial ribosomal protein bL36 family.

Its subcellular location is the plastid. The protein localises to the chloroplast. This chain is Large ribosomal subunit protein bL36c, found in Psilotum nudum (Whisk fern).